The chain runs to 352 residues: Ion-translocating oxidoreductase complex subunit D (352 aa).

5 helical membrane passes run 20–40 (IMLL…WFFG), 42–62 (GTLV…ALVL), 78–109 (ALLT…VIIA), 123–143 (PAMI…TSWL), and 148–168 (IAVN…GHTA). An FMN phosphoryl threonine modification is found at Thr187. 5 consecutive transmembrane segments (helical) span residues 214 to 234 (ILAG…GVWL), 242 to 262 (WHIP…GWLF), 267 to 287 (LAAP…FFIL), 301 to 321 (LIFG…GGYP), and 322 to 342 (DGVA…DYYT).

Belongs to the NqrB/RnfD family. The complex is composed of six subunits: RsxA, RsxB, RsxC, RsxD, RsxE and RsxG. Requires FMN as cofactor.

The protein resides in the cell inner membrane. In terms of biological role, part of a membrane-bound complex that couples electron transfer with translocation of ions across the membrane. Required to maintain the reduced state of SoxR. This chain is Ion-translocating oxidoreductase complex subunit D, found in Escherichia coli O6:K15:H31 (strain 536 / UPEC).